Here is a 215-residue protein sequence, read N- to C-terminus: Probable phosphoglycerate mutase GpmB (215 aa).

Substrate-binding positions include 8–15, 21–22, arginine 58, 82–85, and 151–152; these read RHGETEWN, QG, ELDM, and GI. Histidine 9 functions as the Tele-phosphohistidine intermediate in the catalytic mechanism. Glutamate 82 (proton donor/acceptor) is an active-site residue.

It belongs to the phosphoglycerate mutase family. GpmB subfamily.

It catalyses the reaction (2R)-2-phosphoglycerate = (2R)-3-phosphoglycerate. The protein operates within carbohydrate degradation; glycolysis; pyruvate from D-glyceraldehyde 3-phosphate: step 3/5. The polypeptide is Probable phosphoglycerate mutase GpmB (Proteus mirabilis (strain HI4320)).